The chain runs to 157 residues: MNGGGKNVLNKNSVGSVSEVGPDSTQEETPRDVRLLHLLLASQSIHQYEDQVPLQLMDFAHRYTQGVLKDALVYNDYAGSGNSAGSGLGVEDIRLAIAARTQYQFKPTAPKELMLQLAAERNKKALPQVMGTWGVRLPPEKYCLTAKEWDLEDPKSM.

Residues 1–29 are disordered; sequence MNGGGKNVLNKNSVGSVSEVGPDSTQEET. The Histone-fold domain maps to 30 to 97; the sequence is PRDVRLLHLL…LGVEDIRLAI (68 aa).

It belongs to the TAF9 family. Component of the 1.8 MDa SAGA (Spt-Ada-Gcn5 acetyltransferase) complex, which is composed of 19 subunits TRA1, SPT7, TAF5, NGG1/ADA3, SGF73, SPT20/ADA5, SPT8, TAF12, TAF6, HFI1/ADA1, UBP8, GCN5, ADA2, SPT3, SGF29, TAF10, TAF9, SGF11 and SUS1. The SAGA complex is composed of 4 modules, namely the HAT (histone acetyltransferase) module (GCN5, ADA2, NGG1/ADA3 and SGF29), the DUB (deubiquitinating) module (UBP8, SGF11, SGF73 and SUS1), the core or TAF (TBP-associated factor) module (TAF5, TAF6, TAF9, TAF10 and TAF12), and the Tra1 or SPT (Suppressor of Ty) module (TRA1, HFI1/ADA1, SPT3, SPT7, SPT8 and SPT20/ADA5). The Tra1/SPT module binds activators, the core module recruits TBP (TATA-binding protein), the HAT module contains the histone H3 acetyltransferase GCN5, and the DUB module comprises the histone H2B deubiquitinase UBP8. Also identified in an altered form of SAGA, named SALSA (SAGA altered, Spt8 absent) or SLIK (SAGA-like) complex, which contains a C-terminal truncated form of SPT7 and is missing SPT8. However, it has been shown that the SAGA and SAGA-like SALSA/SLIK transcriptional coactivators are structurally and biochemically equivalent. Component of the 1.2 MDa TFIID complex, which is composed of TATA-binding protein (TBP) and the 14 TBP-associated factors (TAFs). It comprises 1 copy of each TAF1, TAF2, TAF3, TAF7, TAF8, TAF11, TAF13, 2 copies of each TAF4, TAF5, TAF6, TAF9, TAF10, TAF12, and 3 copies of TAF14. In TFIID, TAF9 heterodimerizes with TAF6, forming ultimately an octamer consisting of a TAF6-TAF9 heterotetramer core flanked by TAF4-TAF12 dimers on either side, similar to the histone H2A-H2B-H3-H4 octamer.

Its subcellular location is the nucleus. Functions as a component of both the DNA-binding general transcription initiation factor complex TFIID and the transcription coactivator SAGA complex. Binding of TFIID to a promoter (with or without TATA element) is the initial step in pre-initiation complex (PIC) formation. TFIID plays a key role in the regulation of gene expression by RNA polymerase II through different activities such as transcription activator interaction, core promoter recognition and selectivity, TFIIA and TFIIB interaction, chromatin modification (histone acetylation by TAF1), facilitation of DNA opening and initiation of transcription. SAGA acts as a general cofactor required for essentially all RNA polymerase II transcription. At the promoters, SAGA is required for transcription pre-initiation complex (PIC) recruitment. It influences RNA polymerase II transcriptional activity through different activities such as TBP interaction (via core/TAF module) and promoter selectivity, interaction with transcription activators (via Tra1/SPT module), and chromatin modification through histone acetylation (via HAT module) and deubiquitination (via DUB module). SAGA preferentially acetylates histones H3 (to form H3K9ac, H3K14ac, H3K18ac and H3K23ac) and H2B and deubiquitinates histone H2B. SAGA interacts with DNA via upstream activating sequences (UASs). Also identified in a modified version of SAGA named SALSA or SLIK. The cleavage of SPT7 and the absence of the SPT8 subunit in SLIK neither drive any major conformational differences in its structure compared with SAGA, nor significantly affect HAT, DUB, or DNA-binding activities. The protein is SAGA complex/transcription factor TFIID complex subunit TAF9 (TAF9) of Saccharomyces cerevisiae (strain ATCC 204508 / S288c) (Baker's yeast).